A 142-amino-acid polypeptide reads, in one-letter code: Ribosome-binding factor A (142 aa).

The disordered stretch occupies residues 119–142 (ETLGEVQSESDQPTTDETTTVNKT). The span at 123-142 (EVQSESDQPTTDETTTVNKT) shows a compositional bias: polar residues.

Belongs to the RbfA family. In terms of assembly, monomer. Binds 30S ribosomal subunits, but not 50S ribosomal subunits or 70S ribosomes.

The protein localises to the cytoplasm. Functionally, one of several proteins that assist in the late maturation steps of the functional core of the 30S ribosomal subunit. Associates with free 30S ribosomal subunits (but not with 30S subunits that are part of 70S ribosomes or polysomes). Required for efficient processing of 16S rRNA. May interact with the 5'-terminal helix region of 16S rRNA. The polypeptide is Ribosome-binding factor A (Prochlorococcus marinus (strain MIT 9303)).